Consider the following 258-residue polypeptide: Tryptophan synthase alpha chain (258 aa).

Active-site proton acceptor residues include E52 and D63.

Belongs to the TrpA family. Tetramer of two alpha and two beta chains.

It carries out the reaction (1S,2R)-1-C-(indol-3-yl)glycerol 3-phosphate + L-serine = D-glyceraldehyde 3-phosphate + L-tryptophan + H2O. Its pathway is amino-acid biosynthesis; L-tryptophan biosynthesis; L-tryptophan from chorismate: step 5/5. In terms of biological role, the alpha subunit is responsible for the aldol cleavage of indoleglycerol phosphate to indole and glyceraldehyde 3-phosphate. This is Tryptophan synthase alpha chain from Streptococcus pneumoniae serotype 19F (strain G54).